The primary structure comprises 156 residues: Small ribosomal subunit protein uS7 (156 aa).

The protein belongs to the universal ribosomal protein uS7 family. Part of the 30S ribosomal subunit. Contacts proteins S9 and S11.

Its function is as follows. One of the primary rRNA binding proteins, it binds directly to 16S rRNA where it nucleates assembly of the head domain of the 30S subunit. Is located at the subunit interface close to the decoding center, probably blocks exit of the E-site tRNA. The sequence is that of Small ribosomal subunit protein uS7 from Rhodopseudomonas palustris (strain BisB18).